Here is a 127-residue protein sequence, read N- to C-terminus: Small ribosomal subunit protein eS8 (127 aa).

It belongs to the eukaryotic ribosomal protein eS8 family. As to quaternary structure, part of the 30S ribosomal subunit.

In Pyrococcus horikoshii (strain ATCC 700860 / DSM 12428 / JCM 9974 / NBRC 100139 / OT-3), this protein is Small ribosomal subunit protein eS8 (rps8e).